Reading from the N-terminus, the 531-residue chain is Peptide chain release factor 3 (531 aa).

Positions 10 to 279 (RDRRTFAIIS…DFAQLAPPPR (270 aa)) constitute a tr-type G domain. GTP is bound by residues 19–26 (SHPDAGKT), 87–91 (DTPGH), and 141–144 (NKLD).

Belongs to the TRAFAC class translation factor GTPase superfamily. Classic translation factor GTPase family. PrfC subfamily.

It localises to the cytoplasm. Increases the formation of ribosomal termination complexes and stimulates activities of RF-1 and RF-2. It binds guanine nucleotides but is not codon-specific. It may interact directly with the ribosome. The stimulation of RF-1 and RF-2 is significantly reduced by GTP and GDP, but not by GMP. The polypeptide is Peptide chain release factor 3 (prfC) (Dichelobacter nodosus (Bacteroides nodosus)).